The chain runs to 309 residues: Postacrosomal sheath WW domain-binding protein (309 aa).

Residues 45-87 (GRKTGTLFLTSYRVIFITSCSISDPMLSFMMPFDLMTNLTVEQ) form the GRAM domain. 10 consecutive repeat copies span residues 175–181 (YGAPPAG), 182–188 (YGAPPPG), 189–195 (YGAPPAG), 217–223 (YGAPPLG), 224–230 (YGAPPAG), 231–237 (YGAPPLG), 238–244 (YGAPPLG), 245–251 (YGTPPLG), 252–258 (YGAPPLG), and 259–265 (YGAPPAG). The 10 X 7 AA tandem repeat of Y-G-X-P-P-X-G stretch occupies residues 175–265 (YGAPPAGYGA…PLGYGAPPAG (91 aa)). The PPxY motif signature appears at 186–189 (PPGY). Low complexity predominate over residues 251-272 (GYGAPPLGYGAPPAGNEGPPAG). The tract at residues 251-309 (GYGAPPLGYGAPPAGNEGPPAGYRASPAGSGARPQESTAAQAPENEASLPSASSSQVHS) is disordered. The segment covering 298–309 (SLPSASSSQVHS) has biased composition (polar residues).

As to expression, expressed in testis.

In terms of biological role, may play a role in meiotic resumption and pronuclear formation, mediated by a WW domain-signaling pathway during fertilization. The sequence is that of Postacrosomal sheath WW domain-binding protein (WBP2NL) from Homo sapiens (Human).